The following is a 105-amino-acid chain: UPF0145 protein OEOE_0637 (105 aa).

The protein belongs to the UPF0145 family.

The sequence is that of UPF0145 protein OEOE_0637 from Oenococcus oeni (strain ATCC BAA-331 / PSU-1).